A 179-amino-acid chain; its full sequence is MSRTKSVQDYIRTIVDFPHEGILFRDVTTLFADPRGFRIAIDQMLHPYAGERIDKVVGLEARGFILGGAIAHQLSVGFVPIRKKGKLPGTTISQDYKLEYGEAIVEIHDDAIQPGEKILLVDDLLATGGTAAAGIKLVERLGGEIVSCAFIIDLPDLGGRKVLESMGMDVHALCAFDGL.

Belongs to the purine/pyrimidine phosphoribosyltransferase family. Homodimer.

It localises to the cytoplasm. The enzyme catalyses AMP + diphosphate = 5-phospho-alpha-D-ribose 1-diphosphate + adenine. It functions in the pathway purine metabolism; AMP biosynthesis via salvage pathway; AMP from adenine: step 1/1. Its function is as follows. Catalyzes a salvage reaction resulting in the formation of AMP, that is energically less costly than de novo synthesis. This is Adenine phosphoribosyltransferase from Ruegeria pomeroyi (strain ATCC 700808 / DSM 15171 / DSS-3) (Silicibacter pomeroyi).